The following is a 235-amino-acid chain: Ribonuclease PH (235 aa).

Residues R86 and G124–R126 contribute to the phosphate site.

Belongs to the RNase PH family. As to quaternary structure, homohexameric ring arranged as a trimer of dimers.

The catalysed reaction is tRNA(n+1) + phosphate = tRNA(n) + a ribonucleoside 5'-diphosphate. Functionally, phosphorolytic 3'-5' exoribonuclease that plays an important role in tRNA 3'-end maturation. Removes nucleotide residues following the 3'-CCA terminus of tRNAs; can also add nucleotides to the ends of RNA molecules by using nucleoside diphosphates as substrates, but this may not be physiologically important. Probably plays a role in initiation of 16S rRNA degradation (leading to ribosome degradation) during starvation. This is Ribonuclease PH from Legionella pneumophila (strain Corby).